Reading from the N-terminus, the 310-residue chain is Dehydrodolichyl diphosphate synthase 2 (310 aa).

The protein belongs to the UPP synthase family. Mg(2+) is required as a cofactor.

It functions in the pathway protein modification; protein glycosylation. Functionally, catalyzes cis-prenyl chain elongation to produce the polyprenyl backbone of dolichol, a glycosyl carrier-lipid required for the biosynthesis of several classes of glycoprotein. The chain is Dehydrodolichyl diphosphate synthase 2 from Arabidopsis thaliana (Mouse-ear cress).